A 216-amino-acid polypeptide reads, in one-letter code: Probable GTP-binding protein EngB (216 aa).

In terms of domain architecture, EngB-type G spans 24-205 (ATPEIAFVGR…WARLAALAAE (182 aa)). GTP-binding positions include 32–39 (GRSNVGKS), 59–63 (GRTRA), 86–89 (DLPG), 153–156 (TKTD), and 184–186 (FSA). S39 and T61 together coordinate Mg(2+).

This sequence belongs to the TRAFAC class TrmE-Era-EngA-EngB-Septin-like GTPase superfamily. EngB GTPase family. Requires Mg(2+) as cofactor.

Necessary for normal cell division and for the maintenance of normal septation. The sequence is that of Probable GTP-binding protein EngB from Anaeromyxobacter dehalogenans (strain 2CP-1 / ATCC BAA-258).